The primary structure comprises 344 residues: N,N-dimethyltransferase OxyT (344 aa).

S-adenosyl-L-methionine contacts are provided by residues Asp-205 and Gly-231–Phe-233.

The protein belongs to the class I-like SAM-binding methyltransferase superfamily. Cation-independent O-methyltransferase family.

It catalyses the reaction 4-amino-4-dedimethylamino-anhydrotetracycline + S-adenosyl-L-methionine = 4-methylamino-4-dedimethylamino-anhydrotetracycline + S-adenosyl-L-homocysteine + H(+). It carries out the reaction 4-methylamino-4-dedimethylamino-anhydrotetracycline + S-adenosyl-L-methionine = anhydrotetracycline + S-adenosyl-L-homocysteine + H(+). It functions in the pathway antibiotic biosynthesis; oxytetracycline biosynthesis. Involved in the biosynthesis of the tetracycline antibiotic, oxytetracycline. Catalyzes the dimethylation of 4-amino-4-de(dimethylamino)anhydrotetracycline (4-amino-ATC) to yield anhydrotetracycline (ATC). Also able to catalyze the dimethylation of 7-chloro-, 6-demethyl-, 2-decarboxamido-2-nitrile-, and 4-methylamino-derivatives of 4-amino-4-de(dimethylamino)anhydrotetracycline. The sequence is that of N,N-dimethyltransferase OxyT from Streptomyces rimosus.